A 27-amino-acid polypeptide reads, in one-letter code: Delta-conotoxin TxVIB (27 aa).

3 cysteine pairs are disulfide-bonded: cysteine 2-cysteine 17, cysteine 9-cysteine 21, and cysteine 16-cysteine 26.

Belongs to the conotoxin O1 superfamily. As to expression, expressed by the venom duct.

The protein localises to the secreted. In terms of biological role, delta-conotoxins bind to site 6 of voltage-gated sodium channels (Nav) and inhibit the inactivation process. Induces membrane depolarization and spontaneous repetitive firing of neurons. This Conus textile (Cloth-of-gold cone) protein is Delta-conotoxin TxVIB.